Here is a 498-residue protein sequence, read N- to C-terminus: Type II secretion system protein E (498 aa).

The Zn(2+) site is built by C394, C397, C425, and C428.

This sequence belongs to the GSP E family. In terms of assembly, forms homooligomers; most probably hexamers. Interacts with OutL/GspL. The cofactor is Zn(2+).

The protein localises to the cell inner membrane. The enzyme catalyses ATP + H2O + cellular proteinSide 1 = ADP + phosphate + cellular proteinSide 2.. Functionally, ATPase component of the type II secretion system required for the energy-dependent secretion of extracellular factors such as proteases and toxins from the periplasm. Acts as a molecular motor to provide the energy that is required for assembly of the pseudopilus and the extrusion of substrates generated in the cytoplasm. The polypeptide is Type II secretion system protein E (outE) (Dickeya dadantii (strain 3937) (Erwinia chrysanthemi (strain 3937))).